Reading from the N-terminus, the 237-residue chain is 1-(5-phosphoribosyl)-5-[(5-phosphoribosylamino)methylideneamino] imidazole-4-carboxamide isomerase (237 aa).

The active-site Proton acceptor is Asp-8. Asp-129 functions as the Proton donor in the catalytic mechanism.

This sequence belongs to the HisA/HisF family.

It localises to the cytoplasm. It carries out the reaction 1-(5-phospho-beta-D-ribosyl)-5-[(5-phospho-beta-D-ribosylamino)methylideneamino]imidazole-4-carboxamide = 5-[(5-phospho-1-deoxy-D-ribulos-1-ylimino)methylamino]-1-(5-phospho-beta-D-ribosyl)imidazole-4-carboxamide. Its pathway is amino-acid biosynthesis; L-histidine biosynthesis; L-histidine from 5-phospho-alpha-D-ribose 1-diphosphate: step 4/9. The chain is 1-(5-phosphoribosyl)-5-[(5-phosphoribosylamino)methylideneamino] imidazole-4-carboxamide isomerase from Dehalococcoides mccartyi (strain ATCC BAA-2266 / KCTC 15142 / 195) (Dehalococcoides ethenogenes (strain 195)).